Here is a 221-residue protein sequence, read N- to C-terminus: Beta-phosphoglucomutase (221 aa).

D8 acts as the Nucleophile in catalysis. Mg(2+)-binding residues include D8 and D10. D8 carries the post-translational modification 4-aspartylphosphate. The active-site Proton donor/acceptor is the D10. Positions 10, 46, 47, 49, 116, 117, and 118 each coordinate beta-D-glucose 6-phosphate. A Mg(2+)-binding site is contributed by D170.

It belongs to the HAD-like hydrolase superfamily. CbbY/CbbZ/Gph/YieH family. In terms of assembly, monomer. Mg(2+) is required as a cofactor. In terms of processing, autophosphorylated.

Its subcellular location is the cytoplasm. The enzyme catalyses beta-D-glucose 1-phosphate = beta-D-glucose 6-phosphate. Activated by phosphorylation. Competitively inhibited by alpha-D-galactose-1-phosphate. Its function is as follows. Catalyzes the interconversion of D-glucose 1-phosphate (G1P) and D-glucose 6-phosphate (G6P), forming beta-D-glucose 1,6-(bis)phosphate (beta-G16P) as an intermediate. The beta-phosphoglucomutase (Beta-PGM) acts on the beta-C(1) anomer of G1P. Glucose or lactose are used in preference to maltose, which is only utilized after glucose or lactose has been exhausted. It plays a key role in the regulation of the flow of carbohydrate intermediates in glycolysis and the formation of the sugar nucleotide UDP-glucose. This is Beta-phosphoglucomutase from Lactococcus lactis subsp. lactis (strain IL1403) (Streptococcus lactis).